The following is a 330-amino-acid chain: 2-oxoisovalerate dehydrogenase subunit alpha (330 aa).

Substrate is bound by residues phenylalanine 44, tyrosine 73, 107 to 110 (MPGH), and serine 123. 72-74 (YYR) contacts thiamine diphosphate. Residues 123–125 (SPV), 153–159 (GEGSSNQ), 183–187 (NKYAI), and histidine 252 contribute to the thiamine diphosphate site. Mg(2+) contacts are provided by glutamate 154, asparagine 183, and tyrosine 185. The segment at 249 to 272 (LTPHSSDDDDSSYRGREEVEEAKK) is disordered. The span at 259 to 272 (SSYRGREEVEEAKK) shows a compositional bias: basic and acidic residues.

This sequence belongs to the BCKDHA family. As to quaternary structure, heterotetramer of two alpha and two beta chains. Directly associated with ODBB in the E1 complex. The cofactor is thiamine diphosphate.

It catalyses the reaction N(6)-[(R)-lipoyl]-L-lysyl-[protein] + 3-methyl-2-oxobutanoate + H(+) = N(6)-[(R)-S(8)-2-methylpropanoyldihydrolipoyl]-L-lysyl-[protein] + CO2. The branched-chain alpha-keto dehydrogenase complex catalyzes the overall conversion of alpha-keto acids to acyl-CoA and CO(2). It contains multiple copies of three enzymatic components: branched-chain alpha-keto acid decarboxylase (E1), lipoamide acyltransferase (E2) and lipoamide dehydrogenase (E3). This is 2-oxoisovalerate dehydrogenase subunit alpha (bfmBAA) from Bacillus subtilis (strain 168).